The chain runs to 257 residues: Imidazole glycerol phosphate synthase subunit HisF (257 aa).

Catalysis depends on residues D11 and D130.

Belongs to the HisA/HisF family. Heterodimer of HisH and HisF.

The protein resides in the cytoplasm. The enzyme catalyses 5-[(5-phospho-1-deoxy-D-ribulos-1-ylimino)methylamino]-1-(5-phospho-beta-D-ribosyl)imidazole-4-carboxamide + L-glutamine = D-erythro-1-(imidazol-4-yl)glycerol 3-phosphate + 5-amino-1-(5-phospho-beta-D-ribosyl)imidazole-4-carboxamide + L-glutamate + H(+). It participates in amino-acid biosynthesis; L-histidine biosynthesis; L-histidine from 5-phospho-alpha-D-ribose 1-diphosphate: step 5/9. In terms of biological role, IGPS catalyzes the conversion of PRFAR and glutamine to IGP, AICAR and glutamate. The HisF subunit catalyzes the cyclization activity that produces IGP and AICAR from PRFAR using the ammonia provided by the HisH subunit. This Vibrio campbellii (strain ATCC BAA-1116) protein is Imidazole glycerol phosphate synthase subunit HisF.